The chain runs to 758 residues: Ribosomal RNA processing protein 1 homolog B (758 aa).

Serine 245 is subject to Phosphoserine. Positions 259 to 272 are enriched in basic residues; that stretch reads AVSKKKTALGKNHS. The segment at 259–285 is disordered; it reads AVSKKKTALGKNHSRKDGLSDERGRDD. A compositionally biased stretch (basic and acidic residues) spans 273-285; that stretch reads RKDGLSDERGRDD. Phosphoserine is present on residues serine 350, serine 392, serine 394, and serine 395. Residues 381-598 are disordered; it reads GSRVFCVEEE…KTASLKKRKK (218 aa). Residues 397–408 show a composition bias toward basic residues; sequence QKRRRKKKKKHH. Positions 447–457 are enriched in low complexity; that stretch reads GAEATSSTGEE. A phosphoserine mark is found at serine 452 and serine 458. Basic residues predominate over residues 469-481; that stretch reads HNKRKRPRKKSPR. Low complexity predominate over residues 498-513; it reads SQSGPSGSHPQGPRGS. A Phosphoserine modification is found at serine 513. A compositionally biased stretch (basic residues) spans 566–575; the sequence is QRRRLQKKKA. Serine 579 is modified (phosphoserine). An N6-acetyllysine modification is found at lysine 652. Residues 660 to 681 are disordered; the sequence is KSSTATHPPGPAVQLNKTPSSS. A phosphoserine mark is found at serine 702 and serine 706. Residues 707-758 are disordered; that stretch reads PTGPSRVAFDPEQKPLHGVLKTPTSSPASSPLVAKKPLTTTPRRRPRAMDFF. A Citrulline modification is found at arginine 712. Residue threonine 728 is modified to Phosphothreonine. Phosphoserine is present on residues serine 732, serine 735, and serine 736.

Belongs to the RRP1 family. In terms of assembly, interacts with the transcriptional activator E2F1. Interacts with serine/threonine-protein phosphatase PP1 subunits PPP1CB and PPP1CC but not with PPP1CA. Interacts with 60S ribosomal proteins RPL5 and RPL27, ribosomal processing protein RRP1/NNP1 and other nucleolar proteins including NOP2/NOL1 and FBL. Also interacts with nucleolar protein NPM1/B23. Interacts with splicing factor SRSF1 and with LUC7L3/CROP. Interacts with GTPase activator SIPA1. Interacts with CBX5/HP1alpha, H1-10, NCL, PARP1, TRIM28 and YBX3. As to quaternary structure, (Microbial infection) Interacts with influenza A virus nucleoprotein NP and with RNA-directed RNA polymerase subunits PB1 and PB2. Citrullinated by PADI4.

Its subcellular location is the nucleus. The protein localises to the nucleolus. It localises to the nucleoplasm. It is found in the chromosome. Positively regulates DNA damage-induced apoptosis by acting as a transcriptional coactivator of proapoptotic target genes of the transcriptional activator E2F1. Likely to play a role in ribosome biogenesis by targeting serine/threonine protein phosphatase PP1 to the nucleolus. Involved in regulation of mRNA splicing. Inhibits SIPA1 GTPase activity. Involved in regulating expression of extracellular matrix genes. Associates with chromatin and may play a role in modulating chromatin structure. Functionally, (Microbial infection) Following influenza A virus (IAV) infection, promotes viral mRNA transcription by facilitating the binding of IAV RNA-directed RNA polymerase to capped mRNA. The chain is Ribosomal RNA processing protein 1 homolog B (RRP1B) from Homo sapiens (Human).